The chain runs to 556 residues: Polyphenol oxidase 2 (556 aa).

Residues H57, H81, H90, H250, H254, and H282 each contribute to the Cu cation site. The 2'-(S-cysteinyl)-histidine (Cys-His) cross-link spans 79 to 81 (CTH). Residue H254 participates in substrate binding. The propeptide at 379–556 (SKPSSGARNT…FDDVAVHVIN (178 aa)) is removed in mature form.

It belongs to the tyrosinase family. In terms of assembly, heterotetramer. Cu(2+) is required as a cofactor. In terms of processing, the C-ter is probably cleaved after Gly-378 since the mature active protein is smaller than the protein encoded by the gene.

The catalysed reaction is 2 L-dopa + O2 = 2 L-dopaquinone + 2 H2O. The enzyme catalyses L-tyrosine + O2 = L-dopaquinone + H2O. Functionally, copper-containing oxidase that catalyzes both the o-hydroxylation of monophenols and the subsequent oxidation of the resulting o-diphenols into reactive o-quinones, which evolve spontaneously to produce intermediates, which associate in dark brown pigments. Involved in the initial step of melanin synthesis. Melanins constitute a mechanism of defense and resistance to stress such as UV radiations, free radicals, gamma rays, dehydratation and extreme temperatures, and contribute to the fungal cell-wall resistance against hydrolytic enzymes in avoiding cellular lysis. Fungal pigments are also involved in the formation and stability of spores. The polypeptide is Polyphenol oxidase 2 (PPO2) (Agaricus bisporus (White button mushroom)).